Here is a 169-residue protein sequence, read N- to C-terminus: Secreted RxLR effector protein BLN03 (169 aa).

An N-terminal signal peptide occupies residues 1 to 21; it reads MRPRKYIVVVLLSIAYTMCLA. The dEER motif lies at 51–54; that stretch reads TEER. The chain crosses the membrane as a helical span at residues 149 to 169; that stretch reads GSAFLFVIGFIVLLAFAMTAV.

It belongs to the RxLR effector family. In terms of assembly, interacts with host transcription factor NAC069.

Its subcellular location is the secreted. The protein localises to the host membrane. In terms of biological role, secreted effector that inhibits stress-induced relocalization of the endoplasmic reticulum tail-anchored transcription factors to the nucleus, thus affecting stress responses. The protein is Secreted RxLR effector protein BLN03 of Bremia lactucae (Lettuce downy mildew).